Here is a 141-residue protein sequence, read N- to C-terminus: Large ribosomal subunit protein uL11 (141 aa).

The protein belongs to the universal ribosomal protein uL11 family. In terms of assembly, part of the ribosomal stalk of the 50S ribosomal subunit. Interacts with L10 and the large rRNA to form the base of the stalk. L10 forms an elongated spine to which L12 dimers bind in a sequential fashion forming a multimeric L10(L12)X complex. In terms of processing, one or more lysine residues are methylated.

Functionally, forms part of the ribosomal stalk which helps the ribosome interact with GTP-bound translation factors. This Ruegeria pomeroyi (strain ATCC 700808 / DSM 15171 / DSS-3) (Silicibacter pomeroyi) protein is Large ribosomal subunit protein uL11.